Consider the following 397-residue polypeptide: Zinc finger transcription factor family protein 30 (397 aa).

A disordered region spans residues 1–40; that stretch reads MKLEDDKIHSPTNTEEEGYGSDVEVENGTDISGSKGGSGV. The span at 14–27 shows a compositional bias: acidic residues; the sequence is TEEEGYGSDVEVEN. 3 consecutive C2H2-type zinc fingers follow at residues 51–74, 78–102, and 107–125; these read FRCS…MQAH, YKCT…KQHH, and YMCR…LHIH.

The protein resides in the nucleus. The sequence is that of Zinc finger transcription factor family protein 30 (ztf-30) from Caenorhabditis elegans.